The sequence spans 590 residues: Acyl-CoA ligase sidI (590 aa).

Positions 6–14 (RLQQTLSHL) match the PTS2-type peroxisomal targeting signal motif. Residues 220–228 (TSGSTGNPK), 359–364 (SSYGLT), aspartate 449, and arginine 464 each bind ATP. Threonine 364 lines the substrate pocket. Residues 472 to 474 (GGE) and 543 to 545 (YFF) each bind CoA. ATP is bound at residue lysine 563.

The protein belongs to the ATP-dependent AMP-binding enzyme family.

The protein localises to the peroxisome. Its pathway is siderophore biosynthesis. In terms of biological role, acyl-CoA ligase; part of the siderophore biosynthetic pathway. Aspergillus fumigatus produces 4 types of siderophores, low-molecular-mass iron chelators, including excreted fusarinine C (FsC) and triacetylfusarinine C (TAFC) for iron uptake and intacellular ferricrocin (FC) for hyphal and hydroxyferricrocin (HFC) for conidial iron distribution and storage. TAFC consists of 3 N(2)-acetyl-N(5)-anhydromevalonyl-N(5)-hydroxyornithine residues cyclically linked by ester bonds; FC is a cyclic hexapeptide with the structure Gly-Ser-Gly-(N(5)-acetyl-N(5)-hydroxyornithine)x3. The biosynthesis of all four siderophores depends on the hydroxylation of ornithine, catalyzed by the monooxygenase sidA. Subsequently, the pathways for biosynthesis of extra- and intracellular siderophores split. For biosynthesis of extracellular siderophores, the transacylase sidF transfers anhydromevalonyl to N(5)-hydroxyornithine. The required anhydromevalonyl-CoA moiety is derived from mevalonate by CoA ligation and dehydration catalyzed by sidI and sidH respectively. The acetylation of N(5)-hydroxyornithine for FC biosynthesis involves the constitutively expressed sidL. FC is hydroxylated to HFC by an as yet uncharacterized enzyme during conidiation. Assembly of fusarinine C (FsC) and FC is catalyzed by two different nonribosomal peptide synthetases (NRPS), sidD and sidC respectively. Subsequently, sidG catalyzes N2-acetylation of FsC for forming TAFC. Both extra- and intracellular siderophores are crucial for growth during iron limitation and virulence. In Aspergillus fumigatus (strain ATCC MYA-4609 / CBS 101355 / FGSC A1100 / Af293) (Neosartorya fumigata), this protein is Acyl-CoA ligase sidI.